We begin with the raw amino-acid sequence, 374 residues long: tRNA-specific 2-thiouridylase MnmA (374 aa).

ATP is bound by residues 17-24 (GMSGGVDS) and Met43. The interaction with target base in tRNA stretch occupies residues 103 to 105 (NPD). Cys108 serves as the catalytic Nucleophile. Cys108 and Cys204 are disulfide-bonded. Gly132 provides a ligand contact to ATP. An interaction with tRNA region spans residues 154–156 (KDQ). Cys204 functions as the Cysteine persulfide intermediate in the catalytic mechanism. Residues 316 to 317 (RY) form an interaction with tRNA region.

Belongs to the MnmA/TRMU family.

It localises to the cytoplasm. The enzyme catalyses S-sulfanyl-L-cysteinyl-[protein] + uridine(34) in tRNA + AH2 + ATP = 2-thiouridine(34) in tRNA + L-cysteinyl-[protein] + A + AMP + diphosphate + H(+). In terms of biological role, catalyzes the 2-thiolation of uridine at the wobble position (U34) of tRNA, leading to the formation of s(2)U34. The chain is tRNA-specific 2-thiouridylase MnmA from Pseudomonas putida (strain GB-1).